We begin with the raw amino-acid sequence, 463 residues long: Elongation factor 1-alpha 2 (463 aa).

Position 2 is a n,N,N-trimethylglycine (G2). The region spanning 5–242 (KTHINIVVIG…DTILPPTRPT (238 aa)) is the tr-type G domain. The interval 14–21 (GHVDSGKS) is G1. Residues D17, S18, G19, K20, S21, and T22 each coordinate GTP. D17 is a binding site for Mg(2+). At K36 the chain carries N6,N6,N6-trimethyllysine; alternate. K36 is modified (N6,N6-dimethyllysine; alternate). K36 bears the N6-methyllysine; alternate mark. The residue at position 55 (K55) is an N6,N6,N6-trimethyllysine. An N6,N6-dimethyllysine modification is found at K55. The G2 stretch occupies residues 70 to 74 (GITID). N6,N6,N6-trimethyllysine is present on K79. Residues 91 to 94 (DAPG) are G3. Residues N153, K154, and D156 each coordinate GTP. The segment at 153–156 (NKMD) is G4. S163 bears the Phosphoserine mark. K165 carries the N6,N6-dimethyllysine; alternate modification. K165 bears the N6-methyllysine; alternate mark. K165 bears the N6,N6,N6-trimethyllysine; alternate; by EEF1AKMT3 mark. N6-acetyllysine is present on K179. 3 residues coordinate GTP: S194, G195, and W196. The interval 194-196 (SGW) is G5. Phosphoserine is present on S224. A Phosphothreonine modification is found at T239. 2 positions are modified to 5-glutamyl glycerylphosphorylethanolamine: E301 and E374. Residue K439 is modified to N6-acetyllysine. The interval 444–463 (KSGGAGKVTKSAQKAQKAGK) is disordered.

It belongs to the TRAFAC class translation factor GTPase superfamily. Classic translation factor GTPase family. EF-Tu/EF-1A subfamily. In terms of assembly, homodimer; arranged in a 'head to tail' dimer configuration. Post-translationally, trimethylated at Lys-165 by EEF1AKMT3. Mono-, di-, and trimethylated at Lys-36 by EEF1AKMT4; trimethylated form is predominant. Methylation by EEF1AKMT4 contributes to the fine-tuning of translation rates for a subset of tRNAs. Trimethylated at the N-terminus and dimethylated at Lys-55 by METTL13.

The protein resides in the endoplasmic reticulum membrane. It catalyses the reaction GTP + H2O = GDP + phosphate + H(+). Translation elongation factor that catalyzes the GTP-dependent binding of aminoacyl-tRNA (aa-tRNA) to the A-site of ribosomes during the elongation phase of protein synthesis. Base pairing between the mRNA codon and the aa-tRNA anticodon promotes GTP hydrolysis, releasing the aa-tRNA from EEF1A1 and allowing its accommodation into the ribosome. The growing protein chain is subsequently transferred from the P-site peptidyl tRNA to the A-site aa-tRNA, extending it by one amino acid through ribosome-catalyzed peptide bond formation. The protein is Elongation factor 1-alpha 2 (Eef1a2) of Rattus norvegicus (Rat).